A 338-amino-acid chain; its full sequence is UDP-N-acetylglucosamine--N-acetylmuramyl-(pentapeptide) pyrophosphoryl-undecaprenol N-acetylglucosamine transferase (338 aa).

UDP-N-acetyl-alpha-D-glucosamine is bound by residues 10–12 (TGG), N122, S177, and Q275.

This sequence belongs to the glycosyltransferase 28 family. MurG subfamily.

It localises to the cell inner membrane. The enzyme catalyses di-trans,octa-cis-undecaprenyl diphospho-N-acetyl-alpha-D-muramoyl-L-alanyl-D-glutamyl-meso-2,6-diaminopimeloyl-D-alanyl-D-alanine + UDP-N-acetyl-alpha-D-glucosamine = di-trans,octa-cis-undecaprenyl diphospho-[N-acetyl-alpha-D-glucosaminyl-(1-&gt;4)]-N-acetyl-alpha-D-muramoyl-L-alanyl-D-glutamyl-meso-2,6-diaminopimeloyl-D-alanyl-D-alanine + UDP + H(+). It functions in the pathway cell wall biogenesis; peptidoglycan biosynthesis. Cell wall formation. Catalyzes the transfer of a GlcNAc subunit on undecaprenyl-pyrophosphoryl-MurNAc-pentapeptide (lipid intermediate I) to form undecaprenyl-pyrophosphoryl-MurNAc-(pentapeptide)GlcNAc (lipid intermediate II). This Sulfurovum sp. (strain NBC37-1) protein is UDP-N-acetylglucosamine--N-acetylmuramyl-(pentapeptide) pyrophosphoryl-undecaprenol N-acetylglucosamine transferase.